Reading from the N-terminus, the 71-residue chain is Beta-defensin 7 (71 aa).

The signal sequence occupies residues 1-22; it reads MRIHYVLFAFLLVLLSPFAAFS. Pyrrolidone carboxylic acid is present on Gln23. Residues 23 to 25 constitute a propeptide that is removed on maturation; sequence QDI. Intrachain disulfides connect Cys31–Cys58, Cys38–Cys52, and Cys42–Cys59.

It belongs to the beta-defensin family. LAP/TAP subfamily.

The protein resides in the secreted. Has bactericidal activity. This is Beta-defensin 7 (Defb7) from Mus musculus (Mouse).